A 484-amino-acid polypeptide reads, in one-letter code: Probable glycine dehydrogenase (decarboxylating) subunit 2 (484 aa).

Lys264 carries the N6-(pyridoxal phosphate)lysine modification.

It belongs to the GcvP family. C-terminal subunit subfamily. In terms of assembly, the glycine cleavage system is composed of four proteins: P, T, L and H. In this organism, the P 'protein' is a heterodimer of two subunits. Pyridoxal 5'-phosphate serves as cofactor.

The enzyme catalyses N(6)-[(R)-lipoyl]-L-lysyl-[glycine-cleavage complex H protein] + glycine + H(+) = N(6)-[(R)-S(8)-aminomethyldihydrolipoyl]-L-lysyl-[glycine-cleavage complex H protein] + CO2. In terms of biological role, the glycine cleavage system catalyzes the degradation of glycine. The P protein binds the alpha-amino group of glycine through its pyridoxal phosphate cofactor; CO(2) is released and the remaining methylamine moiety is then transferred to the lipoamide cofactor of the H protein. The sequence is that of Probable glycine dehydrogenase (decarboxylating) subunit 2 from Legionella pneumophila (strain Lens).